An 86-amino-acid polypeptide reads, in one-letter code: Neurotoxin 3FTx-RK (86 aa).

A signal peptide spans 1-21 (MKTLLLTLVVVTIVCLELGYT). Disulfide bonds link C24–C45, C38–C63, C67–C78, and C79–C84.

As to expression, expressed by the venom gland.

Its subcellular location is the secreted. This chain is Neurotoxin 3FTx-RK, found in Bungarus fasciatus (Banded krait).